The sequence spans 134 residues: Profilin-3 (134 aa).

Cysteines 13 and 118 form a disulfide. The Involved in PIP2 interaction signature appears at 84–100 (AVIRGKKGSGGITIKKT). Phosphothreonine is present on Thr-114.

It belongs to the profilin family. In terms of assembly, occurs in many kinds of cells as a complex with monomeric actin in a 1:1 ratio. Post-translationally, phosphorylated by MAP kinases.

Its subcellular location is the cytoplasm. It localises to the cytoskeleton. In terms of biological role, binds to actin and affects the structure of the cytoskeleton. At high concentrations, profilin prevents the polymerization of actin, whereas it enhances it at low concentrations. The chain is Profilin-3 from Olea europaea (Common olive).